The following is a 134-amino-acid chain: Ribosome-binding factor A (134 aa).

Belongs to the RbfA family. In terms of assembly, monomer. Binds 30S ribosomal subunits, but not 50S ribosomal subunits or 70S ribosomes.

The protein resides in the cytoplasm. Functionally, one of several proteins that assist in the late maturation steps of the functional core of the 30S ribosomal subunit. Associates with free 30S ribosomal subunits (but not with 30S subunits that are part of 70S ribosomes or polysomes). Required for efficient processing of 16S rRNA. May interact with the 5'-terminal helix region of 16S rRNA. This chain is Ribosome-binding factor A, found in Cyanothece sp. (strain PCC 7425 / ATCC 29141).